A 519-amino-acid chain; its full sequence is Sodium-dependent dicarboxylate transporter SdcS (519 aa).

The next 14 membrane-spanning stretches (helical) occupy residues 29–49 (VGQL…LLLF), 59–79 (VFVL…AIPI), 103–123 (AQYG…AIAM), 136–156 (IINT…IATG), 159–179 (SMFV…LAII), 201–221 (ALVL…LIGT), 241–261 (FAKW…LVWI), 297–317 (KVVL…EFLL), 322–342 (FTSE…LFLI), 362–382 (LPWG…GISE), 395–415 (LIEG…VLFL), 428–448 (ILPI…LLMV), 451–471 (AMAA…AIVF), and 490–510 (LLSI…VLGI).

This sequence belongs to the SLC13A/DASS transporter (TC 2.A.47) family. NADC subfamily.

The protein localises to the cell membrane. Mediates the transport of dicarboxylates across the cytoplasmic membrane via a Na(+)-electrochemical gradient. The sequence is that of Sodium-dependent dicarboxylate transporter SdcS (sdcS) from Staphylococcus saprophyticus subsp. saprophyticus (strain ATCC 15305 / DSM 20229 / NCIMB 8711 / NCTC 7292 / S-41).